Reading from the N-terminus, the 144-residue chain is Probable transcription termination protein NusA (144 aa).

Residues 101–144 form the KH domain; sequence RTDIVVGVKPEEIGKVIGKEGKNIKLFKDAVSRYFNVNSISVKQ.

It belongs to the NusA family.

The protein localises to the cytoplasm. In terms of biological role, participates in transcription termination. This chain is Probable transcription termination protein NusA, found in Thermoplasma acidophilum (strain ATCC 25905 / DSM 1728 / JCM 9062 / NBRC 15155 / AMRC-C165).